Here is a 369-residue protein sequence, read N- to C-terminus: Histidinol-phosphate aminotransferase 2 (369 aa).

Lysine 231 carries the post-translational modification N6-(pyridoxal phosphate)lysine.

The protein belongs to the class-II pyridoxal-phosphate-dependent aminotransferase family. Histidinol-phosphate aminotransferase subfamily. As to quaternary structure, homodimer. Pyridoxal 5'-phosphate is required as a cofactor.

The catalysed reaction is L-histidinol phosphate + 2-oxoglutarate = 3-(imidazol-4-yl)-2-oxopropyl phosphate + L-glutamate. It participates in amino-acid biosynthesis; L-histidine biosynthesis; L-histidine from 5-phospho-alpha-D-ribose 1-diphosphate: step 7/9. This chain is Histidinol-phosphate aminotransferase 2, found in Legionella pneumophila subsp. pneumophila (strain Philadelphia 1 / ATCC 33152 / DSM 7513).